Here is a 419-residue protein sequence, read N- to C-terminus: 5-methylthioadenosine/S-adenosylhomocysteine deaminase (419 aa).

Zn(2+) contacts are provided by H58 and H60. Residues E87 and H179 each coordinate substrate. Position 206 (H206) interacts with Zn(2+). Positions 209 and 294 each coordinate substrate. Zn(2+) is bound at residue D294.

It belongs to the metallo-dependent hydrolases superfamily. MTA/SAH deaminase family. The cofactor is Zn(2+).

The catalysed reaction is S-adenosyl-L-homocysteine + H2O + H(+) = S-inosyl-L-homocysteine + NH4(+). The enzyme catalyses S-methyl-5'-thioadenosine + H2O + H(+) = S-methyl-5'-thioinosine + NH4(+). Catalyzes the deamination of 5-methylthioadenosine and S-adenosyl-L-homocysteine into 5-methylthioinosine and S-inosyl-L-homocysteine, respectively. Is also able to deaminate adenosine. The polypeptide is 5-methylthioadenosine/S-adenosylhomocysteine deaminase (Pyrococcus furiosus (strain ATCC 43587 / DSM 3638 / JCM 8422 / Vc1)).